Consider the following 726-residue polypeptide: Penicillin-binding protein 1A (726 aa).

Topologically, residues 1-3 (MKK) are cytoplasmic. Residues 4-24 (LVIGILGIVIALFVGLLVFLI) traverse the membrane as a helical; Signal-anchor for type II membrane protein segment. The Periplasmic segment spans residues 25–726 (PIYKNLPDPK…SDLNAILGLR (702 aa)). The interval 45 to 213 (SEVYDAKGRL…AKYNPFYHPE (169 aa)) is transglycosylase. The active-site Proton donor; for transglycosylase activity is the Glu-83. The interval 379–662 (KYLGGNRAEI…SRVALPIWID (284 aa)) is transpeptidase. Catalysis depends on Ser-432, which acts as the Acyl-ester intermediate; for transpeptidase activity.

It in the N-terminal section; belongs to the glycosyltransferase 51 family. In the C-terminal section; belongs to the transpeptidase family.

It localises to the cell inner membrane. It catalyses the reaction [GlcNAc-(1-&gt;4)-Mur2Ac(oyl-L-Ala-gamma-D-Glu-L-Lys-D-Ala-D-Ala)](n)-di-trans,octa-cis-undecaprenyl diphosphate + beta-D-GlcNAc-(1-&gt;4)-Mur2Ac(oyl-L-Ala-gamma-D-Glu-L-Lys-D-Ala-D-Ala)-di-trans,octa-cis-undecaprenyl diphosphate = [GlcNAc-(1-&gt;4)-Mur2Ac(oyl-L-Ala-gamma-D-Glu-L-Lys-D-Ala-D-Ala)](n+1)-di-trans,octa-cis-undecaprenyl diphosphate + di-trans,octa-cis-undecaprenyl diphosphate + H(+). The catalysed reaction is Preferential cleavage: (Ac)2-L-Lys-D-Ala-|-D-Ala. Also transpeptidation of peptidyl-alanyl moieties that are N-acyl substituents of D-alanine.. Its pathway is cell wall biogenesis; peptidoglycan biosynthesis. The sequence is that of Penicillin-binding protein 1A (mrcA) from Aquifex aeolicus (strain VF5).